We begin with the raw amino-acid sequence, 351 residues long: Heat-inducible transcription repressor HrcA (351 aa).

Belongs to the HrcA family.

Functionally, negative regulator of class I heat shock genes (grpE-dnaK-dnaJ and groELS operons). Prevents heat-shock induction of these operons. This Beutenbergia cavernae (strain ATCC BAA-8 / DSM 12333 / CCUG 43141 / JCM 11478 / NBRC 16432 / NCIMB 13614 / HKI 0122) protein is Heat-inducible transcription repressor HrcA.